We begin with the raw amino-acid sequence, 150 residues long: D-aminoacyl-tRNA deacylase (150 aa).

Positions 138–139 (GP) match the Gly-cisPro motif, important for rejection of L-amino acids motif.

The protein belongs to the DTD family. Homodimer.

Its subcellular location is the cytoplasm. The catalysed reaction is glycyl-tRNA(Ala) + H2O = tRNA(Ala) + glycine + H(+). The enzyme catalyses a D-aminoacyl-tRNA + H2O = a tRNA + a D-alpha-amino acid + H(+). In terms of biological role, an aminoacyl-tRNA editing enzyme that deacylates mischarged D-aminoacyl-tRNAs. Also deacylates mischarged glycyl-tRNA(Ala), protecting cells against glycine mischarging by AlaRS. Acts via tRNA-based rather than protein-based catalysis; rejects L-amino acids rather than detecting D-amino acids in the active site. By recycling D-aminoacyl-tRNA to D-amino acids and free tRNA molecules, this enzyme counteracts the toxicity associated with the formation of D-aminoacyl-tRNA entities in vivo and helps enforce protein L-homochirality. The protein is D-aminoacyl-tRNA deacylase of Akkermansia muciniphila (strain ATCC BAA-835 / DSM 22959 / JCM 33894 / BCRC 81048 / CCUG 64013 / CIP 107961 / Muc).